Consider the following 583-residue polypeptide: GTP diphosphokinase CRSH1, chloroplastic (583 aa).

Over residues 1–13 (MATAATTSAAAIP) the composition is skewed to low complexity. The tract at residues 1–68 (MATAATTSAA…SSSSSTPAEG (68 aa)) is disordered. The N-terminal 69 residues, 1-69 (MATAATTSAA…SSSSTPAEGG (69 aa)), are a transit peptide targeting the chloroplast. Positions 19–39 (RRQHPHPRRPGLRPRRLHRLR) are enriched in basic residues. Residues 40–66 (LPAQAAAAAAASSPSTSSSSSSSSTPA) show a composition bias toward low complexity. The 101-residue stretch at 119–219 (ALARALAIAA…LELALKLDMM (101 aa)) folds into the HD domain. EF-hand domains are found at residues 473–508 (GDSNCTNRAFCQLDKNGDGRISIEELTEVMEDLGAG) and 510–542 (KDAKELMHLLDANSDGSLSSDEFEAFQRQIELM). 10 residues coordinate Ca(2+): D486, N488, D490, R492, E497, D520, N522, D524, S526, and E531.

Belongs to the RelA/SpoT family. In terms of tissue distribution, expressed in roots and shoots.

Its subcellular location is the plastid. It localises to the chloroplast. The enzyme catalyses GTP + ATP = guanosine 3'-diphosphate 5'-triphosphate + AMP. Activated by calcium. Functionally, possesses calcium-dependent ppGpp (guanosine 3'-diphosphate 5'-diphosphate) synthetase activity in vitro and is able to functionally complement E.coli relA mutants. May be involved in a rapid plant ppGpp-mediated response to pathogens and other stresses. The polypeptide is GTP diphosphokinase CRSH1, chloroplastic (Oryza sativa subsp. japonica (Rice)).